The sequence spans 356 residues: C-C chemokine receptor type 8 (356 aa).

Residues 1–35 (MDYTLDPSMTTMTDYYYPDSLSSPCDGELIQRNDK) are Extracellular-facing. A helical transmembrane segment spans residues 36–63 (LLLAVFYCLLFVFSLLGNSLVILVLVVC). Residues 64–73 (KKLRNITDIY) are Cytoplasmic-facing. The helical transmembrane segment at 74 to 93 (LLNLALSDLLFVFSFPFQTY) threads the bilayer. Residues 94-107 (YQLDQWVFGTVMCK) lie on the Extracellular side of the membrane. Residues C106 and C184 are joined by a disulfide bond. The helical transmembrane segment at 108-129 (VVSGFYYIGFYSSMFFITLMSV) threads the bilayer. Over 130 to 146 (DRYLAVVHAVYAIKVRT) the chain is Cytoplasmic. A helical transmembrane segment spans residues 147–172 (IRMGTTTLSLLVWLTAIMATIPLLVF). The Extracellular portion of the chain corresponds to 173–203 (YQVASEDGVLQCYSFYNQQTLKWKIFTNFEM). A helical membrane pass occupies residues 204–223 (NILGLLIPFTIFMFCYIKIL). The Cytoplasmic segment spans residues 224–239 (HQLKRCQNHNKTKAIR). A helical membrane pass occupies residues 240 to 264 (LVLIVVIASLLFWVPFNVVLFLTSL). Residues 265–281 (HSMHILDGCSISQQLNY) are Extracellular-facing. A helical transmembrane segment spans residues 282–305 (ATHVTEIISFTHCCVNPVIYAFVG). Residues 306–356 (EKFKKHLSEIFQKSCSHIFIYLGRQMPRESCEKSSSCQQHSFRSSSIDYIL) are Cytoplasmic-facing.

It belongs to the G-protein coupled receptor 1 family.

Its subcellular location is the cell membrane. Its function is as follows. Receptor for the chemokines CCL1/SCYA1/I-309. May regulate monocyte chemotaxis and thymic cell line apoptosis. The chain is C-C chemokine receptor type 8 (CCR8) from Macaca mulatta (Rhesus macaque).